A 347-amino-acid chain; its full sequence is Fructose-1,6-bisphosphatase class 1 (347 aa).

Residues glutamate 106, aspartate 128, isoleucine 130, and aspartate 131 each contribute to the Mg(2+) site. Substrate contacts are provided by residues 131-134 (DGSS), asparagine 223, tyrosine 251, and lysine 281. A Mg(2+)-binding site is contributed by glutamate 287.

The protein belongs to the FBPase class 1 family. In terms of assembly, homotetramer. Requires Mg(2+) as cofactor.

The protein localises to the cytoplasm. The catalysed reaction is beta-D-fructose 1,6-bisphosphate + H2O = beta-D-fructose 6-phosphate + phosphate. The protein operates within carbohydrate biosynthesis; Calvin cycle. The chain is Fructose-1,6-bisphosphatase class 1 from Synechocystis sp. (strain ATCC 27184 / PCC 6803 / Kazusa).